Reading from the N-terminus, the 306-residue chain is C-type lectin domain family 10 member A (306 aa).

Over 1–37 (MTMAYENFQNLGSEEKNQEAGKAPPQSFLCNILSWTH) the chain is Cytoplasmic. The chain crosses the membrane as a helical; Signal-anchor for type II membrane protein span at residues 38–58 (LLLFSLGLSLLLLVVISVIGS). Residues 59–306 (QNSQLRRDLE…VCEMKLAKDS (248 aa)) are Extracellular-facing. 2 N-linked (GlcNAc...) asparagine glycosylation sites follow: Asn76 and Asn168. Residues 174 to 300 (CCPLHWMEHE…QRPYRWVCEM (127 aa)) enclose the C-type lectin domain. Cystine bridges form between Cys175/Cys186, Cys203/Cys298, and Cys276/Cys290.

Homooligomer.

It localises to the membrane. Recognizes terminal galactose and N-acetylgalactosamine units. This Rattus norvegicus (Rat) protein is C-type lectin domain family 10 member A (Clec10a).